The sequence spans 811 residues: TLR4 interactor with leucine rich repeats (811 aa).

The N-terminal stretch at 1-25 (MEGVGAVRFWLVVCGCLAFPPRAES) is a signal peptide. An LRRNT domain is found at 26-57 (VCPERCDCQHPQHLLCTNRGLRAVPKTSSLPS). Residues 26–696 (VCPERCDCQH…AGGRGGVDYQ (671 aa)) are Extracellular-facing. LRR repeat units lie at residues 61–81 (VLTY…DFHR), 84–105 (QLRR…TFEK), 108–129 (RLEE…TLAP), 132–153 (KLRI…SFEG), 156–177 (SLVK…VFAP), 180–201 (NLLY…AFTQ), 204–223 (KLRF…RHAA), 230–251 (SLST…VFQH), 254–275 (RLGL…AFWG), 278–298 (ALRE…TLLE), 302–323 (SLEA…TFGH), and 326–347 (RLRE…IFAA). Asn-73 is a glycosylation site (N-linked (GlcNAc...) asparagine). The LRRCT domain occupies 359–416 (NGWTCDCRLRGLKRWMGNWHSQGRLLTVFVQCRHPPALRGKYLDYLDDQLLQNGSCVD). The N-linked (GlcNAc...) asparagine glycan is linked to Asn-411. Disordered regions lie at residues 414-460 (CVDP…QQRG) and 486-562 (RRGP…QQGR). A compositionally biased stretch (polar residues) spans 421 to 430 (PTAGSRQWPI). Low complexity-rich tracts occupy residues 440–460 (PPAG…QQRG) and 494–508 (QSPS…APQS). Over residues 510–519 (DLHEKPERGR) the composition is skewed to basic and acidic residues. Residues 524–545 (NLPQTEPTPTSEPASGTPSARD) show a composition bias toward polar residues. Asn-589 is a glycosylation site (N-linked (GlcNAc...) asparagine). The chain crosses the membrane as a helical span at residues 697–717 (LLTLVLLAINALLVLLALAAW). Topologically, residues 718-809 (GSRWLRRKLR…RREDHLLQRF (92 aa)) are cytoplasmic. Ser-798 carries the phosphoserine modification.

Belongs to the lipopolysaccharide (LPS) receptor, a multi-protein complex containing at least CD14, MD-2 and TLR4. Interacts with TLR4; this interaction is greatly enhanced following LPS stimulation. Interacts with LPS. N-glycolysaled. In terms of tissue distribution, highly expressed in cortical astrocytes and in cerebellar granule neurons.

Its subcellular location is the membrane. In terms of biological role, component of the TLR4 signaling complex. Mediates the innate immune response to bacterial lipopolysaccharide (LPS) leading to cytokine secretion and the inflammatory response. The polypeptide is TLR4 interactor with leucine rich repeats (Tril) (Rattus norvegicus (Rat)).